The chain runs to 393 residues: S-adenosylmethionine synthase 2 (393 aa).

Glu9 is a Mg(2+) binding site. ATP is bound at residue His15. Residue Glu43 participates in K(+) binding. L-methionine is bound by residues Glu56 and Gln99. ATP-binding positions include Asp167 to Lys169, Ser235 to Phe238, Asp246, Arg252 to Lys253, Ala269, Lys273, and Lys277. Asp246 contributes to the L-methionine binding site. Lys277 is a binding site for L-methionine.

The protein belongs to the AdoMet synthase family. Homotetramer. Mn(2+) is required as a cofactor. It depends on Mg(2+) as a cofactor. Co(2+) serves as cofactor. The cofactor is K(+).

It localises to the cytoplasm. It carries out the reaction L-methionine + ATP + H2O = S-adenosyl-L-methionine + phosphate + diphosphate. The protein operates within amino-acid biosynthesis; S-adenosyl-L-methionine biosynthesis; S-adenosyl-L-methionine from L-methionine: step 1/1. Functionally, catalyzes the formation of S-adenosylmethionine from methionine and ATP. The reaction comprises two steps that are both catalyzed by the same enzyme: formation of S-adenosylmethionine (AdoMet) and triphosphate, and subsequent hydrolysis of the triphosphate. In Vitis vinifera (Grape), this protein is S-adenosylmethionine synthase 2 (METK2).